Reading from the N-terminus, the 117-residue chain is Large ribosomal subunit protein bL19 (117 aa).

It belongs to the bacterial ribosomal protein bL19 family.

Its function is as follows. This protein is located at the 30S-50S ribosomal subunit interface and may play a role in the structure and function of the aminoacyl-tRNA binding site. This Shewanella woodyi (strain ATCC 51908 / MS32) protein is Large ribosomal subunit protein bL19.